A 29-amino-acid chain; its full sequence is MDLITITWASVMVAFTFSLSLVVWGRSGL.

A helical transmembrane segment spans residues 3-23; sequence LITITWASVMVAFTFSLSLVV.

This sequence belongs to the PetN family. In terms of assembly, the 4 large subunits of the cytochrome b6-f complex are cytochrome b6, subunit IV (17 kDa polypeptide, PetD), cytochrome f and the Rieske protein, while the 4 small subunits are PetG, PetL, PetM and PetN. The complex functions as a dimer.

It localises to the plastid. The protein resides in the chloroplast thylakoid membrane. In terms of biological role, component of the cytochrome b6-f complex, which mediates electron transfer between photosystem II (PSII) and photosystem I (PSI), cyclic electron flow around PSI, and state transitions. The protein is Cytochrome b6-f complex subunit 8 of Chaetosphaeridium globosum (Charophycean green alga).